Reading from the N-terminus, the 323-residue chain is tRNA-modifying protein YgfZ (323 aa).

Positions 29 and 182 each coordinate folate.

The protein belongs to the tRNA-modifying YgfZ family.

It is found in the cytoplasm. Folate-binding protein involved in regulating the level of ATP-DnaA and in the modification of some tRNAs. It is probably a key factor in regulatory networks that act via tRNA modification, such as initiation of chromosomal replication. This is tRNA-modifying protein YgfZ from Vibrio cholerae serotype O1 (strain M66-2).